The following is a 269-amino-acid chain: Tropinone reductase homolog At2g29320 (269 aa).

19-43 (LVTGAASGIGYAIVEELAGFGAKIH) contributes to the NADP(+) binding site. Ser152 provides a ligand contact to substrate. The active-site Proton acceptor is the Tyr166.

It belongs to the short-chain dehydrogenases/reductases (SDR) family. SDR65C subfamily.

The sequence is that of Tropinone reductase homolog At2g29320 from Arabidopsis thaliana (Mouse-ear cress).